A 191-amino-acid chain; its full sequence is Ribosome hibernation promotion factor (191 aa).

Positions 100-123 (KQRQEGRPEPLPGPAEAEVNAQGS) are disordered.

This sequence belongs to the HPF/YfiA ribosome-associated protein family. Long HPF subfamily. As to quaternary structure, interacts with 100S ribosomes.

The protein resides in the cytoplasm. In terms of biological role, required for dimerization of active 70S ribosomes into 100S ribosomes in stationary phase; 100S ribosomes are translationally inactive and sometimes present during exponential growth. This Deinococcus radiodurans (strain ATCC 13939 / DSM 20539 / JCM 16871 / CCUG 27074 / LMG 4051 / NBRC 15346 / NCIMB 9279 / VKM B-1422 / R1) protein is Ribosome hibernation promotion factor.